The primary structure comprises 718 residues: Catalase (718 aa).

Residues His-103 and Asn-176 contribute to the active site. Position 390 (Tyr-390) interacts with heme.

The protein belongs to the catalase family. Heme serves as cofactor.

It localises to the peroxisome matrix. It catalyses the reaction 2 H2O2 = O2 + 2 H2O. Catalyzes the degradation of hydrogen peroxide (H(2)O(2)) generated by peroxisomal oxidases to water and oxygen, thereby protecting cells from the toxic effects of hydrogen peroxide. In Blumeria hordei (Barley powdery mildew), this protein is Catalase (CAT1).